A 304-amino-acid chain; its full sequence is Ribosomal protein L11 methyltransferase (304 aa).

S-adenosyl-L-methionine contacts are provided by T147, G168, D190, and N238.

Belongs to the methyltransferase superfamily. PrmA family.

It localises to the cytoplasm. The catalysed reaction is L-lysyl-[protein] + 3 S-adenosyl-L-methionine = N(6),N(6),N(6)-trimethyl-L-lysyl-[protein] + 3 S-adenosyl-L-homocysteine + 3 H(+). Its function is as follows. Methylates ribosomal protein L11. This Prochlorococcus marinus (strain SARG / CCMP1375 / SS120) protein is Ribosomal protein L11 methyltransferase.